Consider the following 501-residue polypeptide: ATP synthase subunit alpha (501 aa).

169–176 (GDRQTGKT) provides a ligand contact to ATP.

Belongs to the ATPase alpha/beta chains family. As to quaternary structure, F-type ATPases have 2 components, CF(1) - the catalytic core - and CF(0) - the membrane proton channel. CF(1) has five subunits: alpha(3), beta(3), gamma(1), delta(1), epsilon(1). CF(0) has three main subunits: a(1), b(2) and c(9-12). The alpha and beta chains form an alternating ring which encloses part of the gamma chain. CF(1) is attached to CF(0) by a central stalk formed by the gamma and epsilon chains, while a peripheral stalk is formed by the delta and b chains.

The protein resides in the cell membrane. It carries out the reaction ATP + H2O + 4 H(+)(in) = ADP + phosphate + 5 H(+)(out). Its function is as follows. Produces ATP from ADP in the presence of a proton gradient across the membrane. The alpha chain is a regulatory subunit. This chain is ATP synthase subunit alpha, found in Streptococcus pneumoniae serotype 2 (strain D39 / NCTC 7466).